Consider the following 48-residue polypeptide: Photosystem II reaction center protein K (48 aa).

The propeptide occupies 1 to 11 (MFLFNLEQSIG). A helical transmembrane segment spans residues 23 to 43 (LVDVLPIIPLLFLLLAFVWQA).

This sequence belongs to the PsbK family. As to quaternary structure, PSII is composed of 1 copy each of membrane proteins PsbA, PsbB, PsbC, PsbD, PsbE, PsbF, PsbH, PsbI, PsbJ, PsbK, PsbL, PsbM, PsbT, PsbX, PsbY, PsbZ, Psb30/Ycf12, at least 3 peripheral proteins of the oxygen-evolving complex and a large number of cofactors. It forms dimeric complexes.

It is found in the plastid. Its subcellular location is the chloroplast thylakoid membrane. Its function is as follows. One of the components of the core complex of photosystem II (PSII). PSII is a light-driven water:plastoquinone oxidoreductase that uses light energy to abstract electrons from H(2)O, generating O(2) and a proton gradient subsequently used for ATP formation. It consists of a core antenna complex that captures photons, and an electron transfer chain that converts photonic excitation into a charge separation. The polypeptide is Photosystem II reaction center protein K (Lepocinclis buetschlii).